A 196-amino-acid polypeptide reads, in one-letter code: Nucleoid occlusion factor SlmA (196 aa).

One can recognise an HTH tetR-type domain in the interval 7 to 68; the sequence is SNRREEILQA…GLIEFIEEAL (62 aa). A DNA-binding region (H-T-H motif) is located at residues 31–50; the sequence is TTAKLAQQVGVSEAALYRHF. Positions 65–142 form a coiled coil; that stretch reads EEALMSRINR…QLRQILRERK (78 aa).

The protein belongs to the nucleoid occlusion factor SlmA family. In terms of assembly, homodimer. Interacts with FtsZ.

The protein resides in the cytoplasm. It is found in the nucleoid. Required for nucleoid occlusion (NO) phenomenon, which prevents Z-ring formation and cell division over the nucleoid. Acts as a DNA-associated cell division inhibitor that binds simultaneously chromosomal DNA and FtsZ, and disrupts the assembly of FtsZ polymers. SlmA-DNA-binding sequences (SBS) are dispersed on non-Ter regions of the chromosome, preventing FtsZ polymerization at these regions. This Vibrio vulnificus (strain CMCP6) protein is Nucleoid occlusion factor SlmA.